A 606-amino-acid polypeptide reads, in one-letter code: Phosphomethylpyrimidine synthase (606 aa).

The disordered stretch occupies residues 84–103 (EPYPARSVKPEDNGLTSSPI). Substrate is bound by residues Asn209, Met238, Tyr267, His303, 323 to 325 (SRG), 364 to 367 (DGLR), and Glu403. His407 contacts Zn(2+). Residue Tyr430 participates in substrate binding. His471 is a binding site for Zn(2+). [4Fe-4S] cluster is bound by residues Cys551, Cys554, and Cys559.

It belongs to the ThiC family. In terms of assembly, homodimer. The cofactor is [4Fe-4S] cluster.

It catalyses the reaction 5-amino-1-(5-phospho-beta-D-ribosyl)imidazole + S-adenosyl-L-methionine = 4-amino-2-methyl-5-(phosphooxymethyl)pyrimidine + CO + 5'-deoxyadenosine + formate + L-methionine + 3 H(+). It functions in the pathway cofactor biosynthesis; thiamine diphosphate biosynthesis. Functionally, catalyzes the synthesis of the hydroxymethylpyrimidine phosphate (HMP-P) moiety of thiamine from aminoimidazole ribotide (AIR) in a radical S-adenosyl-L-methionine (SAM)-dependent reaction. In Bartonella tribocorum (strain CIP 105476 / IBS 506), this protein is Phosphomethylpyrimidine synthase.